Consider the following 637-residue polypeptide: Threonine--tRNA ligase (637 aa).

Residues 1 to 61 (MVTVTLPDGS…DADAQLAIVT (61 aa)) form the TGS domain. Residues 244-535 (DHRRLAKQLD…LIEHHAGNFP (292 aa)) form a catalytic region. Cysteine 335, histidine 386, and histidine 512 together coordinate Zn(2+).

This sequence belongs to the class-II aminoacyl-tRNA synthetase family. Homodimer. The cofactor is Zn(2+).

It localises to the cytoplasm. The enzyme catalyses tRNA(Thr) + L-threonine + ATP = L-threonyl-tRNA(Thr) + AMP + diphosphate + H(+). Its function is as follows. Catalyzes the attachment of threonine to tRNA(Thr) in a two-step reaction: L-threonine is first activated by ATP to form Thr-AMP and then transferred to the acceptor end of tRNA(Thr). Also edits incorrectly charged L-seryl-tRNA(Thr). The chain is Threonine--tRNA ligase from Thiobacillus denitrificans (strain ATCC 25259 / T1).